A 248-amino-acid chain; its full sequence is 2,3-bisphosphoglycerate-dependent phosphoglycerate mutase (248 aa).

Substrate contacts are provided by residues 8 to 15 (RHGESLWN), 21 to 22 (TG), Arg-60, 87 to 90 (EKHY), Lys-98, 114 to 115 (RR), and 183 to 184 (GN). Residue His-9 is the Tele-phosphohistidine intermediate of the active site. The active-site Proton donor/acceptor is Glu-87.

It belongs to the phosphoglycerate mutase family. BPG-dependent PGAM subfamily.

It catalyses the reaction (2R)-2-phosphoglycerate = (2R)-3-phosphoglycerate. It participates in carbohydrate degradation; glycolysis; pyruvate from D-glyceraldehyde 3-phosphate: step 3/5. Catalyzes the interconversion of 2-phosphoglycerate and 3-phosphoglycerate. This is 2,3-bisphosphoglycerate-dependent phosphoglycerate mutase from Porphyromonas gingivalis (strain ATCC 33277 / DSM 20709 / CIP 103683 / JCM 12257 / NCTC 11834 / 2561).